The primary structure comprises 488 residues: Katanin p60 ATPase-containing subunit A-like 1 (488 aa).

Met1 carries the post-translational modification N-acetylmethionine. The segment at 128 to 179 is disordered; it reads GAGARGLVGRAHQISKSDKAASRDKDYRARGRDDKARKNMQDGASDGEIPKF. Residues 142-167 show a composition bias toward basic and acidic residues; that stretch reads SKSDKAASRDKDYRARGRDDKARKNM. At Ser172 the chain carries Phosphoserine. 246-253 lines the ATP pocket; that stretch reads GPPGTGKT.

This sequence belongs to the AAA ATPase family. Katanin p60 subunit A1 subfamily. A-like 1 sub-subfamily. Interacts with KATNB1 and KATNBL1.

The protein resides in the cytoplasm. It localises to the cytoskeleton. It is found in the spindle pole. Its subcellular location is the spindle. It catalyses the reaction n ATP + n H2O + a microtubule = n ADP + n phosphate + (n+1) alpha/beta tubulin heterodimers.. In terms of biological role, regulates microtubule dynamics in Sertoli cells, a process that is essential for spermiogenesis and male fertility. Severs microtubules in an ATP-dependent manner, promoting rapid reorganization of cellular microtubule arrays. Has microtubule-severing activity in vitro. The polypeptide is Katanin p60 ATPase-containing subunit A-like 1 (Katnal1) (Rattus norvegicus (Rat)).